Here is a 400-residue protein sequence, read N- to C-terminus: Phosphoglycerate kinase (400 aa).

Residues 24 to 26 (DFN), Arg-39, 62 to 65 (HLGK), Arg-123, and Arg-156 each bind substrate. Residues Lys-207, Gly-298, Glu-329, and 356–359 (GGDS) each bind ATP.

It belongs to the phosphoglycerate kinase family. In terms of assembly, monomer.

It localises to the cytoplasm. It catalyses the reaction (2R)-3-phosphoglycerate + ATP = (2R)-3-phospho-glyceroyl phosphate + ADP. Its pathway is carbohydrate degradation; glycolysis; pyruvate from D-glyceraldehyde 3-phosphate: step 2/5. This is Phosphoglycerate kinase from Clostridioides difficile (strain 630) (Peptoclostridium difficile).